Here is a 204-residue protein sequence, read N- to C-terminus: Large ribosomal subunit protein eL15y (204 aa).

Positions 162 to 204 are disordered; the sequence is RGLTSEGKKNRGLRGKGHNNHKNRPSRRATWKKNNSISLRRYR. Over residues 171–192 the composition is skewed to basic residues; it reads NRGLRGKGHNNHKNRPSRRATW. Polar residues predominate over residues 193 to 204; sequence KKNNSISLRRYR.

This sequence belongs to the eukaryotic ribosomal protein eL15 family.

This is Large ribosomal subunit protein eL15y (RPL15B) from Arabidopsis thaliana (Mouse-ear cress).